A 245-amino-acid polypeptide reads, in one-letter code: Adenosylcobinamide-GDP ribazoletransferase (245 aa).

Transmembrane regions (helical) follow at residues 35–55 (WFPL…ALGL), 108–128 (IGAF…IGAH), 137–157 (GVLI…AALV), 176–196 (IAIG…TPAI), and 197–217 (TTVT…HLAR).

This sequence belongs to the CobS family. The cofactor is Mg(2+).

The protein resides in the cell inner membrane. It catalyses the reaction alpha-ribazole + adenosylcob(III)inamide-GDP = adenosylcob(III)alamin + GMP + H(+). The enzyme catalyses alpha-ribazole 5'-phosphate + adenosylcob(III)inamide-GDP = adenosylcob(III)alamin 5'-phosphate + GMP + H(+). It participates in cofactor biosynthesis; adenosylcobalamin biosynthesis; adenosylcobalamin from cob(II)yrinate a,c-diamide: step 7/7. In terms of biological role, joins adenosylcobinamide-GDP and alpha-ribazole to generate adenosylcobalamin (Ado-cobalamin). Also synthesizes adenosylcobalamin 5'-phosphate from adenosylcobinamide-GDP and alpha-ribazole 5'-phosphate. The polypeptide is Adenosylcobinamide-GDP ribazoletransferase (Nitratidesulfovibrio vulgaris (strain ATCC 29579 / DSM 644 / CCUG 34227 / NCIMB 8303 / VKM B-1760 / Hildenborough) (Desulfovibrio vulgaris)).